The primary structure comprises 81 residues: ATP synthase subunit c, chloroplastic (81 aa).

A run of 2 helical transmembrane segments spans residues 3–23 and 57–77; these read PLIP…ASIG and LAFM…LLFA.

Belongs to the ATPase C chain family. As to quaternary structure, F-type ATPases have 2 components, F(1) - the catalytic core - and F(0) - the membrane proton channel. F(1) has five subunits: alpha(3), beta(3), gamma(1), delta(1), epsilon(1). F(0) has four main subunits: a(1), b(1), b'(1) and c(10-14). The alpha and beta chains form an alternating ring which encloses part of the gamma chain. F(1) is attached to F(0) by a central stalk formed by the gamma and epsilon chains, while a peripheral stalk is formed by the delta, b and b' chains.

It is found in the plastid. It localises to the chloroplast thylakoid membrane. Its function is as follows. F(1)F(0) ATP synthase produces ATP from ADP in the presence of a proton or sodium gradient. F-type ATPases consist of two structural domains, F(1) containing the extramembraneous catalytic core and F(0) containing the membrane proton channel, linked together by a central stalk and a peripheral stalk. During catalysis, ATP synthesis in the catalytic domain of F(1) is coupled via a rotary mechanism of the central stalk subunits to proton translocation. Key component of the F(0) channel; it plays a direct role in translocation across the membrane. A homomeric c-ring of between 10-14 subunits forms the central stalk rotor element with the F(1) delta and epsilon subunits. This Cycas taitungensis (Prince sago) protein is ATP synthase subunit c, chloroplastic.